Consider the following 109-residue polypeptide: Nucleoid-associated protein Sputw3181_1707 (109 aa).

This sequence belongs to the YbaB/EbfC family. Homodimer.

The protein localises to the cytoplasm. The protein resides in the nucleoid. Its function is as follows. Binds to DNA and alters its conformation. May be involved in regulation of gene expression, nucleoid organization and DNA protection. This chain is Nucleoid-associated protein Sputw3181_1707, found in Shewanella sp. (strain W3-18-1).